Reading from the N-terminus, the 835-residue chain is Ribonuclease R (835 aa).

Positions 267–593 (RVDLRELPLV…LLHRAIKYLI (327 aa)) constitute an RNB domain. Residues 652–733 (GDELEGVIAN…DDKQIDFELV (82 aa)) form the S1 motif domain. Over residues 739–754 (LRGEGKTAKKRAAEAK) the composition is skewed to basic and acidic residues. The tract at residues 739-835 (LRGEGKTAKK…KTKRTKQDAQ (97 aa)) is disordered. Over residues 755-764 (RKAKEKKRAA) the composition is skewed to basic residues. The segment covering 765–777 (TRSSSKESATARA) has biased composition (low complexity). Basic and acidic residues predominate over residues 783–793 (PTKRPEQTDSG). Residues 809-829 (KPKVKKAHKKKPHSKPKKTKR) show a composition bias toward basic residues.

This sequence belongs to the RNR ribonuclease family. RNase R subfamily.

It localises to the cytoplasm. The catalysed reaction is Exonucleolytic cleavage in the 3'- to 5'-direction to yield nucleoside 5'-phosphates.. 3'-5' exoribonuclease that releases 5'-nucleoside monophosphates and is involved in maturation of structured RNAs. This is Ribonuclease R from Vibrio parahaemolyticus serotype O3:K6 (strain RIMD 2210633).